The primary structure comprises 173 residues: Large ribosomal subunit protein uL10 (173 aa).

It belongs to the universal ribosomal protein uL10 family. As to quaternary structure, part of the ribosomal stalk of the 50S ribosomal subunit. The N-terminus interacts with L11 and the large rRNA to form the base of the stalk. The C-terminus forms an elongated spine to which L12 dimers bind in a sequential fashion forming a multimeric L10(L12)X complex.

In terms of biological role, forms part of the ribosomal stalk, playing a central role in the interaction of the ribosome with GTP-bound translation factors. In Micrococcus luteus (strain ATCC 4698 / DSM 20030 / JCM 1464 / CCM 169 / CCUG 5858 / IAM 1056 / NBRC 3333 / NCIMB 9278 / NCTC 2665 / VKM Ac-2230) (Micrococcus lysodeikticus), this protein is Large ribosomal subunit protein uL10.